The sequence spans 151 residues: Transcriptional regulator MraZ (151 aa).

SpoVT-AbrB domains follow at residues 7–53 (EYDC…SQTE) and 82–125 (INEV…SPDL).

This sequence belongs to the MraZ family. As to quaternary structure, forms oligomers.

It is found in the cytoplasm. It localises to the nucleoid. This is Transcriptional regulator MraZ from Cytophaga hutchinsonii (strain ATCC 33406 / DSM 1761 / CIP 103989 / NBRC 15051 / NCIMB 9469 / D465).